Reading from the N-terminus, the 167-residue chain is Protein-export protein SecB (167 aa).

Belongs to the SecB family. In terms of assembly, homotetramer, a dimer of dimers. One homotetramer interacts with 1 SecA dimer.

The protein resides in the cytoplasm. Its function is as follows. One of the proteins required for the normal export of preproteins out of the cell cytoplasm. It is a molecular chaperone that binds to a subset of precursor proteins, maintaining them in a translocation-competent state. It also specifically binds to its receptor SecA. The sequence is that of Protein-export protein SecB from Wolbachia sp. subsp. Brugia malayi (strain TRS).